The primary structure comprises 285 residues: Integrin alpha-1 (285 aa).

Topologically, residues 1-285 are extracellular; that stretch reads ENMTFGTTLV…HYSQDWVMLG (285 aa). N-linked (GlcNAc...) asparagine glycosylation is found at asparagine 2, asparagine 40, asparagine 208, and asparagine 232. The region spanning 66-279 is the VWFA domain; it reads IVLDGSNSIY…QAGFSAHYSQ (214 aa).

It belongs to the integrin alpha chain family. Heterodimer of an alpha and a beta subunit. Alpha-1 associates with beta-1.

It is found in the membrane. Functionally, integrin alpha-1/beta-1 is a receptor for laminin and collagen. It recognizes the proline-hydroxylated sequence G-F-P-G-E-R in collagen. Involved in anchorage-dependent, negative regulation of EGF-stimulated cell growth. The polypeptide is Integrin alpha-1 (ITGA1) (Gallus gallus (Chicken)).